We begin with the raw amino-acid sequence, 155 residues long: 3-hydroxyacyl-[acyl-carrier-protein] dehydratase FabZ (155 aa).

The active site involves H54.

Belongs to the thioester dehydratase family. FabZ subfamily.

It is found in the cytoplasm. It carries out the reaction a (3R)-hydroxyacyl-[ACP] = a (2E)-enoyl-[ACP] + H2O. In terms of biological role, involved in unsaturated fatty acids biosynthesis. Catalyzes the dehydration of short chain beta-hydroxyacyl-ACPs and long chain saturated and unsaturated beta-hydroxyacyl-ACPs. This chain is 3-hydroxyacyl-[acyl-carrier-protein] dehydratase FabZ, found in Burkholderia mallei (strain NCTC 10247).